A 111-amino-acid polypeptide reads, in one-letter code: Disintegrin piscivostatin-alpha (111 aa).

Residues 1 to 20 form the signal peptide; it reads MIQVLLVTICLAVFPYQGSS. A propeptide spanning residues 21–44 is cleaved from the precursor; sequence IILESGNVNDYEVVYPRKITPLPK. A Disintegrin domain is found at 45–111; it reads GAVQPKNPCC…GDCPRKHFYA (67 aa). Disulfide bonds link cysteine 53-cysteine 76, cysteine 67-cysteine 73, cysteine 72-cysteine 97, and cysteine 85-cysteine 104. Positions 89 to 91 match the Cell attachment site motif; sequence RGD. Positions 110-111 are excised as a propeptide; it reads YA.

This sequence belongs to the disintegrin family. Dimeric disintegrin subfamily. In terms of assembly, heterodimer with piscivostatin-beta; disulfide-linked. Expressed by the venom gland.

The protein localises to the secreted. Functionally, inhibits fibrinogen interaction with platelets. Acts by binding to alpha-IIb/beta-3 (ITGA2B/ITGB3) on the platelet surface and inhibits both ADP-induced platelet aggregation and platelet aggregate dissociation in human platelet-rich plasma. In Agkistrodon piscivorus piscivorus (Eastern cottonmouth), this protein is Disintegrin piscivostatin-alpha.